We begin with the raw amino-acid sequence, 316 residues long: MKIANNTVVTEFILLGLTQSQDIQLLVFVLILIFYLIILPGNFLIIFTIRSDPGLTAPLYLFLGNLAFLDASYSFIVAPRMLVDFLSEKKVISYRGCITQLFFLHFLGGGEGLLLVVMAFDRYIAICRPLHCSTVMNPRACYAMMLALWLGGFVHSIIQVVLILRLPFCGPNQLDNFFCDVRQVIKLACTDMFVVELLMVFNSGLMTLLCFLGLLASYAVILCHVRRAASEGKNKAMSTCTTRVIIILLMFGPAIFIYICPFRALPADKMVSLFHTVIFPLMNPMIYTLRNQEVKTSMKRLLSRHVVCQVDFIIRN.

At 1–26 the chain is on the cytoplasmic side; sequence MKIANNTVVTEFILLGLTQSQDIQLL. Residues 27–47 traverse the membrane as a helical segment; it reads VFVLILIFYLIILPGNFLIIF. The Extracellular portion of the chain corresponds to 48-56; it reads TIRSDPGLT. Residues 57–77 form a helical membrane-spanning segment; it reads APLYLFLGNLAFLDASYSFIV. The Cytoplasmic portion of the chain corresponds to 78–99; the sequence is APRMLVDFLSEKKVISYRGCIT. The cysteines at positions 97 and 179 are disulfide-linked. Residues 100-120 form a helical membrane-spanning segment; that stretch reads QLFFLHFLGGGEGLLLVVMAF. Residues 121-143 lie on the Extracellular side of the membrane; it reads DRYIAICRPLHCSTVMNPRACYA. Residues 144-164 form a helical membrane-spanning segment; it reads MMLALWLGGFVHSIIQVVLIL. At 165–204 the chain is on the cytoplasmic side; it reads RLPFCGPNQLDNFFCDVRQVIKLACTDMFVVELLMVFNSG. A helical transmembrane segment spans residues 205–225; it reads LMTLLCFLGLLASYAVILCHV. The Extracellular segment spans residues 226 to 243; that stretch reads RRAASEGKNKAMSTCTTR. A helical transmembrane segment spans residues 244-264; sequence VIIILLMFGPAIFIYICPFRA. The Cytoplasmic segment spans residues 265-268; that stretch reads LPAD. A helical membrane pass occupies residues 269-289; sequence KMVSLFHTVIFPLMNPMIYTL. Topologically, residues 290-316 are extracellular; sequence RNQEVKTSMKRLLSRHVVCQVDFIIRN.

The protein belongs to the G-protein coupled receptor 1 family.

It is found in the membrane. Functionally, odorant receptor. The chain is Olfactory receptor 4N4C from Homo sapiens (Human).